The following is a 279-amino-acid chain: Putative hydro-lyase GDI0188/Gdia_2258 (279 aa).

It belongs to the D-glutamate cyclase family.

In Gluconacetobacter diazotrophicus (strain ATCC 49037 / DSM 5601 / CCUG 37298 / CIP 103539 / LMG 7603 / PAl5), this protein is Putative hydro-lyase GDI0188/Gdia_2258.